A 74-amino-acid polypeptide reads, in one-letter code: Alpha-conotoxin GeXIVA (74 aa).

The signal sequence occupies residues 1–22 (MKLTCVLIITVLFLTACQLTTA). Positions 23-46 (VTYSRGEHKHRALMSTGTNYRLPK) are excised as a propeptide. The segment at 56 to 64 (RSPYDRRRR) is interacts with alpha-9-alpha-10 (CHRNA9-CHRNA10) nAChR.

The protein belongs to the conotoxin O1 superfamily. In terms of processing, the native disulfide bond pairing has not been studied. Three isomers may exist: the bead isomer (I-II; III-IV), the globular isomer (I-III; II-IV), the ribbon isomer (I-IV; II-III). They have all been synthesized and their activity tested. All of them show similar potency on alpha-9-alpha-10 (CHRNA9-CHRNA10) nAChR, showing that disulfide bonds does not significantly affect their activity. In addition, removal of disulfide bonds does not affect the activity on alpha-9-alpha-10 (CHRNA9-CHRNA10) nAChR either. In terms of tissue distribution, expressed by the venom duct.

The protein resides in the secreted. Its function is as follows. Alpha-conotoxins act on postsynaptic membranes, they bind to the nicotinic acetylcholine receptors (nAChR) and thus inhibit them. This toxin is very potent on alpha-9-alpha-10/CHRNA9-CHRNA10 nAChR (IC(50)=4.61-12 nM for the bead isomer (I-II; III-IV), IC(50)=7-16 nM for the ribbon isomer (I-IV; II-III) and IC(50)=22.7 nM for the globular isomer (I-III; II-IV)). The bead isomer also shows a weak inhibition on other nAChRs (alpha-1-beta-1-delta-epsilon/CHRNA1-CHRNB1-CHRND-CHRNE, alpha-7/CHRNA7, alpha-6/alpha-3-beta-2-beta-3 (CHRNA6/CHRNA3-CHRNB2-CHRNB3), alpha-3-beta-2/CHRNA3-CHRNB2, alpha-2-beta-2/CHRNA2-CHRNB2, alpha-6/alpha-3-beta-4 (CHRNA6/CHRNA3-CHRNB4), alpha-4-beta-2/CHRNA4-CHRNB2, alpha-4-beta-4/CHRNA4-CHRNB4, alpha-2-beta-4/CHRNA2-CHRNB4, alpha-3-beta-4/CHRNA3-CHRNB4). The toxin blockade is voltage-dependent, and its binding site does not overlap with the binding site of the competitive antagonist alpha-conotoxin RgIA. The toxin inhibits Sf9 cell growth. Both the bead and ribbon isomers relieve pain effects in the rat chronic constriction injury (CCI) model of neuropathic pain, and in the acute pain model of tail flick test, but have no effect on motor performance. This chain is Alpha-conotoxin GeXIVA, found in Conus generalis (General cone).